The sequence spans 99 residues: Carboxysome shell vertex protein CcmL (99 aa).

Residues 1–83 (MRIAKVRGTV…VDAAVIAIID (83 aa)) form the BMV domain.

It belongs to the CcmL/EutN family. CcmL subfamily. Homopentamer. Interacts with full-length CcmM.

It localises to the carboxysome. Its function is as follows. Probably forms vertices in the carboxysome, a polyhedral inclusion where RuBisCO (ribulose bisphosphate carboxylase, rbcL-rbcS) is sequestered. Has been modeled to induce curvature upon insertion into an otherwise flat hexagonal molecular layer of CcmK subunits. In terms of biological role, beta-carboxysome assembly initiates when soluble RuBisCO is condensed into a liquid matrix in a pre-carboxysome by the RbcS-like domains of probably both CcmM58 and CcmM35. CcmN interacts with the N-terminus of CcmM58, and then recruits the CcmK2 major shell protein via CcmN's encapsulation peptide. Shell formation requires CcmK proteins and CcmO. CcmL caps the otherwise elongated carboxysome. Once fully encapsulated carboxysomes are formed, they migrate within the cell probably via interactions with the cytoskeleton. The chain is Carboxysome shell vertex protein CcmL from Synechococcus elongatus (strain ATCC 33912 / PCC 7942 / FACHB-805) (Anacystis nidulans R2).